A 523-amino-acid polypeptide reads, in one-letter code: Glycerate kinase (523 aa).

At Ser60 the chain carries Phosphoserine. Lys200 carries the post-translational modification N6-acetyllysine.

This sequence belongs to the glycerate kinase type-2 family.

The protein resides in the cytoplasm. It catalyses the reaction (R)-glycerate + ATP = (2R)-3-phosphoglycerate + ADP + H(+). The chain is Glycerate kinase (Glyctk) from Rattus norvegicus (Rat).